Consider the following 617-residue polypeptide: 1-deoxy-D-xylulose-5-phosphate synthase (617 aa).

Residues His-76 and 117–119 each bind thiamine diphosphate; that span reads GHS. A Mg(2+)-binding site is contributed by Asp-148. Residues 149 to 150, Asn-177, Tyr-285, and Glu-366 each bind thiamine diphosphate; that span reads GA. Residue Asn-177 participates in Mg(2+) binding.

It belongs to the transketolase family. DXPS subfamily. As to quaternary structure, homodimer. Mg(2+) serves as cofactor. The cofactor is thiamine diphosphate.

It carries out the reaction D-glyceraldehyde 3-phosphate + pyruvate + H(+) = 1-deoxy-D-xylulose 5-phosphate + CO2. The protein operates within metabolic intermediate biosynthesis; 1-deoxy-D-xylulose 5-phosphate biosynthesis; 1-deoxy-D-xylulose 5-phosphate from D-glyceraldehyde 3-phosphate and pyruvate: step 1/1. Catalyzes the acyloin condensation reaction between C atoms 2 and 3 of pyruvate and glyceraldehyde 3-phosphate to yield 1-deoxy-D-xylulose-5-phosphate (DXP). The polypeptide is 1-deoxy-D-xylulose-5-phosphate synthase (Histophilus somni (strain 129Pt) (Haemophilus somnus)).